Here is a 194-residue protein sequence, read N- to C-terminus: Putative 3-methyladenine DNA glycosylase (194 aa).

It belongs to the DNA glycosylase MPG family.

This chain is Putative 3-methyladenine DNA glycosylase, found in Aeropyrum pernix (strain ATCC 700893 / DSM 11879 / JCM 9820 / NBRC 100138 / K1).